Consider the following 285-residue polypeptide: UPF0603 protein At1g54780, chloroplastic (285 aa).

Disordered stretches follow at residues 1-48 and 228-251; these read METL…LSTR and GQPD…TKEE. Polar residues predominate over residues 22–40; sequence HQTKPTSHSLSLSKPTTFS. Basic and acidic residues predominate over residues 238–251; it reads KDSKRESNFKTKEE. A helical membrane pass occupies residues 259–279; the sequence is FSLVVGGLLVIAFVVPMAQYF.

It belongs to the UPF0603 family.

The protein resides in the plastid. It localises to the chloroplast thylakoid membrane. The chain is UPF0603 protein At1g54780, chloroplastic from Arabidopsis thaliana (Mouse-ear cress).